A 229-amino-acid chain; its full sequence is Potassium/proton antiporter CemA (229 aa).

A run of 3 helical transmembrane segments spans residues 6-26, 114-134, and 189-209; these read AFIP…ISLS, ILCF…LLII, and IISG…KYWI.

Belongs to the CemA family.

It localises to the plastid. It is found in the chloroplast inner membrane. The catalysed reaction is K(+)(in) + H(+)(out) = K(+)(out) + H(+)(in). Functionally, contributes to K(+)/H(+) antiport activity by supporting proton efflux to control proton extrusion and homeostasis in chloroplasts in a light-dependent manner to modulate photosynthesis. Prevents excessive induction of non-photochemical quenching (NPQ) under continuous-light conditions. Indirectly promotes efficient inorganic carbon uptake into chloroplasts. The protein is Potassium/proton antiporter CemA of Carica papaya (Papaya).